A 463-amino-acid polypeptide reads, in one-letter code: Argininosuccinate lyase (463 aa).

The protein belongs to the lyase 1 family. Argininosuccinate lyase subfamily.

It is found in the cytoplasm. It carries out the reaction 2-(N(omega)-L-arginino)succinate = fumarate + L-arginine. Its pathway is amino-acid biosynthesis; L-arginine biosynthesis; L-arginine from L-ornithine and carbamoyl phosphate: step 3/3. In Prochlorococcus marinus (strain NATL1A), this protein is Argininosuccinate lyase.